Reading from the N-terminus, the 281-residue chain is Undecaprenyl-diphosphatase (281 aa).

7 consecutive transmembrane segments (helical) span residues 4–24, 46–63, 83–103, 108–128, 187–207, 222–242, and 257–277; these read ILLL…FLPI, AFEV…CWEF, FVLN…LFGK, VLFS…IIFW, AVAT…ATAY, EFTL…FVCV, and FAWY…TGLI.

It belongs to the UppP family.

Its subcellular location is the cell inner membrane. It catalyses the reaction di-trans,octa-cis-undecaprenyl diphosphate + H2O = di-trans,octa-cis-undecaprenyl phosphate + phosphate + H(+). In terms of biological role, catalyzes the dephosphorylation of undecaprenyl diphosphate (UPP). Confers resistance to bacitracin. This is Undecaprenyl-diphosphatase from Polynucleobacter necessarius subsp. necessarius (strain STIR1).